A 701-amino-acid polypeptide reads, in one-letter code: Polyribonucleotide nucleotidyltransferase (701 aa).

2 residues coordinate Mg(2+): Asp-487 and Asp-493. The KH domain maps to 554–613; the sequence is PTMIAMKIDTDKIRDVIGKGGATIRAICEETKASIDIEDDGSIKIFGETKEAADAAKQRI. The region spanning 623-691 is the S1 motif domain; it reads GKIYVGKVER…NRGRIKLSIK (69 aa).

This sequence belongs to the polyribonucleotide nucleotidyltransferase family. Component of the RNA degradosome, which is a multiprotein complex involved in RNA processing and mRNA degradation. It depends on Mg(2+) as a cofactor.

It localises to the cytoplasm. It carries out the reaction RNA(n+1) + phosphate = RNA(n) + a ribonucleoside 5'-diphosphate. Involved in mRNA degradation. Catalyzes the phosphorolysis of single-stranded polyribonucleotides processively in the 3'- to 5'-direction. The chain is Polyribonucleotide nucleotidyltransferase from Pseudomonas entomophila (strain L48).